A 694-amino-acid polypeptide reads, in one-letter code: Follicle-stimulating hormone receptor (694 aa).

An N-terminal signal peptide occupies residues 1-17; sequence MAFLWISFLVFLGSGSG. Disulfide bonds link C18/C25 and C23/C32. The region spanning 18 to 46 is the LRRNT domain; sequence CHHRICHCSDRVFICQESKVTEIPSDIPR. Topologically, residues 18–367 are extracellular; it reads CHHRICHCSD…EDIMGYNFLR (350 aa). 9 LRR repeats span residues 49–72, 73–97, 98–118, 119–143, 144–169, 170–192, 193–216, 217–240, and 241–259; these read VEMRFVLTKLQVIPRGAFSGFRDL, EKIEISQNDALEVIEADVFSNLPKL, HEIRIEKANNLVLIDPEAFWN, LPNLRYLLISNTGIKHLPAVYKIQS, HQKVLLDIQDNINIRTIERNSFAGLS, SESEILWLNKNGIQEIQNQAFNG, TQLDELNLSDNINLEDLPNGIFQG, ANGPVILDISRTRIHSLPSDGLKN, and LKKLKARSAYNFKTLPNLD. N191 and N199 each carry an N-linked (GlcNAc...) asparagine glycan. N268 is a glycosylation site (N-linked (GlcNAc...) asparagine). Cystine bridges form between C275-C347, C276-C292, C276-C357, and C292-C339. N293 is a glycosylation site (N-linked (GlcNAc...) asparagine). Sulfotyrosine is present on Y336. The chain crosses the membrane as a helical span at residues 368–388; the sequence is VLIWFISILSITGNIVVLVIL. The Cytoplasmic segment spans residues 389–399; the sequence is ITSQYKLTVPR. The helical transmembrane segment at 400 to 422 threads the bilayer; that stretch reads FLMCNLAFADLCIGIYLLLIASV. The Extracellular portion of the chain corresponds to 423–444; the sequence is DIHTKSQYHNYAIDWQTGAGCD. C443 and C518 form a disulfide bridge. Residues 445-466 traverse the membrane as a helical segment; sequence AAGFFTVFASELSVYTLTAITL. The Cytoplasmic portion of the chain corresponds to 467–486; that stretch reads ERWHTITYAMQLDRKVRLRH. A helical transmembrane segment spans residues 487 to 509; it reads AASIMLIGWIFAFSVALLPIFGV. The Extracellular segment spans residues 510–529; the sequence is SSYMKVSICLPMDIDSPLSQ. A helical transmembrane segment spans residues 530–551; that stretch reads FYVISLLVLNVLASVIICTCYT. Residues 552 to 574 are Cytoplasmic-facing; it reads HIYFTVRNPNIISSTSDAKIAKR. A helical transmembrane segment spans residues 575–598; that stretch reads MAMLIFTDFLCMAPISFFAISASV. Residues 599–609 are Extracellular-facing; sequence KMPLITVSKSK. Residues 610-631 form a helical membrane-spanning segment; it reads ILLVLFYPINSCANPFLYAVFT. Topologically, residues 632–694 are cytoplasmic; the sequence is KTFRRDFFIL…YKLVPLNHLS (63 aa).

This sequence belongs to the G-protein coupled receptor 1 family. FSH/LSH/TSH subfamily. In terms of assembly, homotrimer. Functions as a homotrimer binding the FSH hormone heterodimer composed of CGA and FSHB. Interacts with ARRB2. Interacts with APPL2; interaction is independent of follicle stimulating hormone stimulation. N-glycosylated; indirectly required for FSH-binding, possibly via a conformational change that allows high affinity binding of hormone. In terms of processing, sulfated.

The protein resides in the cell membrane. Its function is as follows. G protein-coupled receptor for follitropin, the follicle-stimulating hormone. Through cAMP production activates the downstream PI3K-AKT and ERK1/ERK2 signaling pathways. The sequence is that of Follicle-stimulating hormone receptor (FSHR) from Notamacropus eugenii (Tammar wallaby).